The following is a 364-amino-acid chain: Fructose-bisphosphate aldolase B (364 aa).

Residue alanine 2 is modified to N-acetylalanine. N6-succinyllysine is present on lysine 13. Serine 36 is modified (phosphoserine). Residue threonine 39 is modified to Phosphothreonine. Arginine 43 contributes to the beta-D-fructose 1,6-bisphosphate binding site. Residue serine 89 is modified to Phosphoserine. Phosphothreonine is present on threonine 119. The residue at position 121 (lysine 121) is an N6-succinyllysine. At serine 132 the chain carries Phosphoserine. Glutamate 188 serves as the catalytic Proton acceptor. Residue lysine 230 is the Schiff-base intermediate with dihydroxyacetone-P of the active site. 4 positions are modified to phosphoserine: serine 272, serine 276, serine 299, and serine 301. 272 to 274 contacts beta-D-fructose 1,6-bisphosphate; that stretch reads SGG. Beta-D-fructose 1,6-bisphosphate is bound at residue arginine 304. A Phosphoserine modification is found at serine 309. Position 317 is an N6-succinyllysine (lysine 317).

Belongs to the class I fructose-bisphosphate aldolase family. In terms of assembly, homotetramer. Interacts with BBS1, BBS2, BBS4 and BBS7. Forms a ternary complex with G6PD and TP53; this interaction is direct.

It is found in the cytoplasm. Its subcellular location is the cytosol. The protein resides in the cytoskeleton. The protein localises to the microtubule organizing center. It localises to the centrosome. It is found in the centriolar satellite. The enzyme catalyses beta-D-fructose 1,6-bisphosphate = D-glyceraldehyde 3-phosphate + dihydroxyacetone phosphate. It carries out the reaction beta-D-fructose 1-phosphate = D-glyceraldehyde + dihydroxyacetone phosphate. Its pathway is carbohydrate degradation; glycolysis; D-glyceraldehyde 3-phosphate and glycerone phosphate from D-glucose: step 4/4. The protein operates within carbohydrate biosynthesis; gluconeogenesis. It participates in carbohydrate metabolism; fructose metabolism. Catalyzes the aldol cleavage of fructose 1,6-biphosphate to form two triosephosphates dihydroxyacetone phosphate and D-glyceraldehyde 3-phosphate in glycolysis as well as the reverse stereospecific aldol addition reaction in gluconeogenesis. In fructolysis, metabolizes fructose 1-phosphate derived from the phosphorylation of dietary fructose by fructokinase into dihydroxyacetone phosphate and D-glyceraldehyde. Acts as an adapter independently of its enzymatic activity, exerts a tumor suppressor role by stabilizing the ternary complex with G6PD and TP53 to inhibit G6PD activity and keep oxidative pentose phosphate metabolism in check. This chain is Fructose-bisphosphate aldolase B (ALDOB), found in Oryctolagus cuniculus (Rabbit).